A 397-amino-acid chain; its full sequence is Enoyl-[acyl-carrier-protein] reductase [NADH] FabV (397 aa).

Residues 48–53 (GASTGY), 74–75 (FE), 111–112 (DA), and 139–140 (LA) contribute to the NAD(+) site. Tyr-225 contributes to the substrate binding site. Tyr-235 (proton donor) is an active-site residue. NAD(+) is bound by residues Lys-244 and 273–275 (VVT).

It belongs to the TER reductase family. Monomer.

It carries out the reaction a 2,3-saturated acyl-[ACP] + NAD(+) = a (2E)-enoyl-[ACP] + NADH + H(+). The protein operates within lipid metabolism; fatty acid biosynthesis. With respect to regulation, resistant to triclosan. Functionally, involved in the final reduction of the elongation cycle of fatty acid synthesis (FAS II). Catalyzes the NADH-dependent reduction of the carbon-carbon double bond in the enoyl moiety that is covalently linked to an acyl carrier protein (ACP). The sequence is that of Enoyl-[acyl-carrier-protein] reductase [NADH] FabV from Aeromonas salmonicida (strain A449).